The sequence spans 386 residues: Putative 8-amino-7-oxononanoate synthase (386 aa).

Residue arginine 22 participates in substrate binding. 109 to 110 (GY) serves as a coordination point for pyridoxal 5'-phosphate. Histidine 134 provides a ligand contact to substrate. Residues serine 182, 207–210 (DEAH), and 238–241 (TLSK) each bind pyridoxal 5'-phosphate. Lysine 241 carries the N6-(pyridoxal phosphate)lysine modification. Residue threonine 356 coordinates substrate.

It belongs to the class-II pyridoxal-phosphate-dependent aminotransferase family. BioF subfamily. In terms of assembly, homodimer. Pyridoxal 5'-phosphate serves as cofactor.

The enzyme catalyses 6-carboxyhexanoyl-[ACP] + L-alanine + H(+) = (8S)-8-amino-7-oxononanoate + holo-[ACP] + CO2. Its pathway is cofactor biosynthesis; biotin biosynthesis. Its function is as follows. Catalyzes the decarboxylative condensation of pimeloyl-[acyl-carrier protein] and L-alanine to produce 8-amino-7-oxononanoate (AON), [acyl-carrier protein], and carbon dioxide. The polypeptide is Putative 8-amino-7-oxononanoate synthase (bioF) (Trichormus variabilis (strain ATCC 29413 / PCC 7937) (Anabaena variabilis)).